Here is a 95-residue protein sequence, read N- to C-terminus: Aspartyl/glutamyl-tRNA(Asn/Gln) amidotransferase subunit C (95 aa).

The protein belongs to the GatC family. Heterotrimer of A, B and C subunits.

It carries out the reaction L-glutamyl-tRNA(Gln) + L-glutamine + ATP + H2O = L-glutaminyl-tRNA(Gln) + L-glutamate + ADP + phosphate + H(+). The catalysed reaction is L-aspartyl-tRNA(Asn) + L-glutamine + ATP + H2O = L-asparaginyl-tRNA(Asn) + L-glutamate + ADP + phosphate + 2 H(+). Allows the formation of correctly charged Asn-tRNA(Asn) or Gln-tRNA(Gln) through the transamidation of misacylated Asp-tRNA(Asn) or Glu-tRNA(Gln) in organisms which lack either or both of asparaginyl-tRNA or glutaminyl-tRNA synthetases. The reaction takes place in the presence of glutamine and ATP through an activated phospho-Asp-tRNA(Asn) or phospho-Glu-tRNA(Gln). The sequence is that of Aspartyl/glutamyl-tRNA(Asn/Gln) amidotransferase subunit C from Rhodopseudomonas palustris (strain BisA53).